Consider the following 414-residue polypeptide: CinA-like protein (414 aa).

The protein belongs to the CinA family.

The sequence is that of CinA-like protein from Acidobacterium capsulatum (strain ATCC 51196 / DSM 11244 / BCRC 80197 / JCM 7670 / NBRC 15755 / NCIMB 13165 / 161).